We begin with the raw amino-acid sequence, 368 residues long: Peptide chain release factor 2 (368 aa).

N5-methylglutamine is present on Q249.

It belongs to the prokaryotic/mitochondrial release factor family. Post-translationally, methylated by PrmC. Methylation increases the termination efficiency of RF2.

It localises to the cytoplasm. Its function is as follows. Peptide chain release factor 2 directs the termination of translation in response to the peptide chain termination codons UGA and UAA. The chain is Peptide chain release factor 2 from Rhodococcus erythropolis (strain PR4 / NBRC 100887).